A 313-amino-acid polypeptide reads, in one-letter code: Small ribosomal subunit protein uS2 (313 aa).

Residues 281 to 301 form a disordered region; that stretch reads AAPAAPAVEPAPEAAQEATAE.

It belongs to the universal ribosomal protein uS2 family.

The polypeptide is Small ribosomal subunit protein uS2 (Caulobacter sp. (strain K31)).